Here is a 118-residue protein sequence, read N- to C-terminus: Large ribosomal subunit protein bL20 (118 aa).

It belongs to the bacterial ribosomal protein bL20 family.

Functionally, binds directly to 23S ribosomal RNA and is necessary for the in vitro assembly process of the 50S ribosomal subunit. It is not involved in the protein synthesizing functions of that subunit. The protein is Large ribosomal subunit protein bL20 of Lacticaseibacillus casei (strain BL23) (Lactobacillus casei).